The primary structure comprises 355 residues: DnaJ homolog dnj-20 (355 aa).

An N-terminal signal peptide occupies residues 1–21 (MRILNVSLLVLASSLVAFVEC). Positions 24 to 89 (DFYKILGVAK…EKRAMYDRHG (66 aa)) constitute a J domain.

In Caenorhabditis elegans, this protein is DnaJ homolog dnj-20.